The following is a 698-amino-acid chain: Superoxide-generating NADPH oxidase heavy chain subunit B (698 aa).

Disordered regions lie at residues 1–68 and 134–158; these read MNEK…NITP and NDQVNSNTDNNNNTNNNNNTNNNKN. Over 1 to 184 the chain is Cytoplasmic; that stretch reads MNEKKELQQE…KIRGWWWHRG (184 aa). 2 stretches are compositionally biased toward polar residues: residues 16 to 25 and 33 to 53; these read FQTPKNQQLE and EISSTGNETSESGISSPPISQ. Composition is skewed to low complexity over residues 54 to 65 and 138 to 156; these read NDNSNNENESLN and NSNTDNNNNTNNNNNTNNN. Residues 185 to 205 form a helical membrane-spanning segment; that stretch reads ISTYIMLFYIALNIGVGVHMF. At 206-229 the chain is on the extracellular side; the sequence is YNMYHSDIFKFLGLSFCFSRTAAR. Residues 225-375 form the Ferric oxidoreductase domain; it reads RTAARLINLN…LFIPFYILLC (151 aa). A helical transmembrane segment spans residues 230 to 250; it reads LINLNSAVILLPVLRNFLSWL. Over 251–269 the chain is Cytoplasmic; it reads RGTIVNNYIPIDKHLNFHK. Heme contacts are provided by H268 and H282. A helical membrane pass occupies residues 270-290; that stretch reads LCAFMLFCCTIIHCVGHYISF. Residues 291–324 lie on the Extracellular side of the membrane; the sequence is KKINDDVLKIDDGKSVAGDYLNININNFPDEKYL. Residues 325–345 form a helical membrane-spanning segment; it reads FFKSVPGITGHIMLLILILIV. At 346-355 the chain is on the cytoplasmic side; sequence SSSMWRIRRP. The helical transmembrane segment at 356–376 threads the bilayer; that stretch reads MFEIFWYVHHLFIPFYILLCF. Heme is bound by residues H364 and H377. The Extracellular portion of the chain corresponds to 377–388; it reads HGYSKILKKDPQ. The helical transmembrane segment at 389 to 409 threads the bilayer; sequence SWMWIIAPFILYSIERLIRIA. In terms of domain architecture, FAD-binding FR-type spans 404–528; that stretch reads RLIRIARSKK…DGPFGAPAEN (125 aa). Residues 410 to 698 are Cytoplasmic-facing; that stretch reads RSKKRVILEK…CHLIFHKENF (289 aa). Residue 460–466 participates in FAD binding; that stretch reads HPFTITS.

Composed of a heavy chain and a light chain. FAD is required as a cofactor.

The protein localises to the membrane. Critical component of the membrane-bound oxidase that generates superoxide. It is the terminal component of a respiratory chain that transfers single electrons from cytoplasmic NADPH across the plasma membrane to molecular oxygen on the exterior. The chain is Superoxide-generating NADPH oxidase heavy chain subunit B (noxB) from Dictyostelium discoideum (Social amoeba).